We begin with the raw amino-acid sequence, 384 residues long: Methylthioribose-1-phosphate isomerase (384 aa).

Residue aspartate 255 is the Proton donor of the active site.

It belongs to the eIF-2B alpha/beta/delta subunits family. MtnA subfamily.

The protein localises to the cytoplasm. It is found in the nucleus. The enzyme catalyses 5-(methylsulfanyl)-alpha-D-ribose 1-phosphate = 5-(methylsulfanyl)-D-ribulose 1-phosphate. It functions in the pathway amino-acid biosynthesis; L-methionine biosynthesis via salvage pathway; L-methionine from S-methyl-5-thio-alpha-D-ribose 1-phosphate: step 1/6. Catalyzes the interconversion of methylthioribose-1-phosphate (MTR-1-P) into methylthioribulose-1-phosphate (MTRu-1-P). The chain is Methylthioribose-1-phosphate isomerase (mri1) from Talaromyces marneffei (strain ATCC 18224 / CBS 334.59 / QM 7333) (Penicillium marneffei).